Reading from the N-terminus, the 1004-residue chain is Kinesin-like protein KIN-7I (1004 aa).

Positions 6–326 (KILVSVRVRP…LLFATCAKEV (321 aa)) constitute a Kinesin motor domain. 89–96 (GQTSSGKT) contributes to the ATP binding site. Coiled coils occupy residues 335–402 (VVSE…AQSR), 517–576 (KKEY…QKQS), and 634–661 (SVEKEDTKKNLSSKKEDLKQNLSMDQSE). 3 disordered regions span residues 567 to 599 (EQSVEKQKQSPKKEEMEQYLSRDMSEQVTKSLP), 628 to 671 (SQQT…PEDE), and 802 to 830 (TMQHHSTHSDDTDTKTMKPENTDDGGEKT). 2 stretches are compositionally biased toward basic and acidic residues: residues 569–582 (SVEKQKQSPKKEEM) and 634–652 (SVEKEDTKKNLSSKKEDLK). The segment covering 653–663 (QNLSMDQSEQL) has biased composition (polar residues). Residue K881 forms a Glycyl lysine isopeptide (Lys-Gly) (interchain with G-Cter in ubiquitin) linkage.

It belongs to the TRAFAC class myosin-kinesin ATPase superfamily. Kinesin family. KIN-7 subfamily.

The polypeptide is Kinesin-like protein KIN-7I (Arabidopsis thaliana (Mouse-ear cress)).